The chain runs to 462 residues: uncharacterized protein (462 aa).

Residues Asp-12, His-14, Asp-48, Asn-81, His-179, and His-202 each coordinate a divalent metal cation. A coiled-coil region spans residues 258-291; the sequence is ESAETKAFLNEKEREAEEKLSDAVAELAQDAEVK.

It belongs to the metallophosphoesterase superfamily. The cofactor is a divalent metal cation.

This is an uncharacterized protein from Bacillus subtilis (strain 168).